The primary structure comprises 277 residues: Ribosomal RNA small subunit methyltransferase A (277 aa).

The S-adenosyl-L-methionine site is built by N27, L29, G54, E75, D95, and N118.

Belongs to the class I-like SAM-binding methyltransferase superfamily. rRNA adenine N(6)-methyltransferase family. RsmA subfamily.

Its subcellular location is the cytoplasm. The enzyme catalyses adenosine(1518)/adenosine(1519) in 16S rRNA + 4 S-adenosyl-L-methionine = N(6)-dimethyladenosine(1518)/N(6)-dimethyladenosine(1519) in 16S rRNA + 4 S-adenosyl-L-homocysteine + 4 H(+). Functionally, specifically dimethylates two adjacent adenosines (A1518 and A1519) in the loop of a conserved hairpin near the 3'-end of 16S rRNA in the 30S particle. May play a critical role in biogenesis of 30S subunits. The polypeptide is Ribosomal RNA small subunit methyltransferase A (Chlamydia trachomatis serovar L2 (strain ATCC VR-902B / DSM 19102 / 434/Bu)).